The sequence spans 412 residues: Gamma-glutamyl phosphate reductase (412 aa).

It belongs to the gamma-glutamyl phosphate reductase family.

Its subcellular location is the cytoplasm. The catalysed reaction is L-glutamate 5-semialdehyde + phosphate + NADP(+) = L-glutamyl 5-phosphate + NADPH + H(+). The protein operates within amino-acid biosynthesis; L-proline biosynthesis; L-glutamate 5-semialdehyde from L-glutamate: step 2/2. Catalyzes the NADPH-dependent reduction of L-glutamate 5-phosphate into L-glutamate 5-semialdehyde and phosphate. The product spontaneously undergoes cyclization to form 1-pyrroline-5-carboxylate. The chain is Gamma-glutamyl phosphate reductase from Bartonella quintana (strain Toulouse) (Rochalimaea quintana).